The chain runs to 443 residues: Exodeoxyribonuclease 7 large subunit (443 aa).

This sequence belongs to the XseA family. Heterooligomer composed of large and small subunits.

Its subcellular location is the cytoplasm. The catalysed reaction is Exonucleolytic cleavage in either 5'- to 3'- or 3'- to 5'-direction to yield nucleoside 5'-phosphates.. In terms of biological role, bidirectionally degrades single-stranded DNA into large acid-insoluble oligonucleotides, which are then degraded further into small acid-soluble oligonucleotides. This is Exodeoxyribonuclease 7 large subunit from Legionella pneumophila (strain Paris).